The following is a 157-amino-acid chain: MLRQVLSSTSVRRLLVSPTRCMSGKQNVPDKIEYSTPPEIIDYEESPHLPVPEYPIRPDEPLETRKQRLLYQSRKRGMLENDLLLSTFVAKYLKDFDAEETAQYDQLINGVSNDWDIYYWATNTKPTPPEYDTDVMKLLKQHVKNTERVQRIRQPDL.

A mitochondrion-targeting transit peptide spans 1 to 21 (MLRQVLSSTSVRRLLVSPTRC).

The protein belongs to the SDHAF2 family. As to quaternary structure, interacts with the flavoprotein subunit within the SDH catalytic dimer.

The protein localises to the mitochondrion matrix. Functionally, plays an essential role in the assembly of succinate dehydrogenase (SDH), an enzyme complex (also referred to as respiratory complex II) that is a component of both the tricarboxylic acid (TCA) cycle and the mitochondrial electron transport chain, and which couples the oxidation of succinate to fumarate with the reduction of ubiquinone (coenzyme Q) to ubiquinol. Required for flavinylation (covalent attachment of FAD) of the flavoprotein subunit of the SDH catalytic dimer. The polypeptide is Succinate dehydrogenase assembly factor 2-A, mitochondrial (Drosophila mojavensis (Fruit fly)).